A 176-amino-acid polypeptide reads, in one-letter code: Large ribosomal subunit protein bL17 (176 aa).

The interval 124–176 (AAPKAARQDRSKRVKGSRKTEASAAKAAPAAQAAPELPAESDAPAAEAAPTEE) is disordered. The span at 145-176 (ASAAKAAPAAQAAPELPAESDAPAAEAAPTEE) shows a compositional bias: low complexity.

It belongs to the bacterial ribosomal protein bL17 family. As to quaternary structure, part of the 50S ribosomal subunit. Contacts protein L32.

This is Large ribosomal subunit protein bL17 from Chlorobium phaeovibrioides (strain DSM 265 / 1930) (Prosthecochloris vibrioformis (strain DSM 265)).